Consider the following 20-residue polypeptide: Apidaecin 2+ (20 aa).

Pro residues predominate over residues 1-13 (GKPNKPRPAPIKP). The segment at 1–20 (GKPNKPRPAPIKPRPPHPRL) is disordered.

It is found in the secreted. In terms of biological role, antimicrobial peptide active against many Gram-negative enterobacterial and plant-associated bacterial species. Not active against other bacterial species like H.pylori, P.mirabilis, B.pertussis or N.gonorrhoeae. The protein is Apidaecin 2+ of Pimpla disparis (Parasitic wasp).